A 148-amino-acid chain; its full sequence is CASP-like protein 1 (148 aa).

The next 3 membrane-spanning stretches (helical) occupy residues 31 to 51, 74 to 94, and 121 to 141; these read FIYF…TSLL, VLLL…GYIG, and IAAG…SFFT.

It belongs to the Casparian strip membrane proteins (CASP) family. As to quaternary structure, homodimer and heterodimers.

The protein resides in the cell membrane. The polypeptide is CASP-like protein 1 (Panax ginseng (Korean ginseng)).